The following is a 98-amino-acid chain: NADH-ubiquinone oxidoreductase chain 4L (98 aa).

The next 3 membrane-spanning stretches (helical) occupy residues 1–21 (MSLVHMNILLAFTMSLTGLLM), 29–49 (ALLCLEGMMLSLFILMTITIL), and 59–79 (TPIILLVFAACEAAVGLALLV).

It belongs to the complex I subunit 4L family. As to quaternary structure, core subunit of respiratory chain NADH dehydrogenase (Complex I) which is composed of 45 different subunits.

It localises to the mitochondrion inner membrane. It catalyses the reaction a ubiquinone + NADH + 5 H(+)(in) = a ubiquinol + NAD(+) + 4 H(+)(out). In terms of biological role, core subunit of the mitochondrial membrane respiratory chain NADH dehydrogenase (Complex I) which catalyzes electron transfer from NADH through the respiratory chain, using ubiquinone as an electron acceptor. Part of the enzyme membrane arm which is embedded in the lipid bilayer and involved in proton translocation. This Lipotes vexillifer (Yangtze river dolphin) protein is NADH-ubiquinone oxidoreductase chain 4L (MT-ND4L).